We begin with the raw amino-acid sequence, 690 residues long: Elongation factor G (690 aa).

Residues 8-283 form the tr-type G domain; sequence EDYRNFGIMA…AVVDYLPSPV (276 aa). Residues 17–24, 81–85, and 135–138 each bind GTP; these read AHIDAGKT, DTPGH, and NKMD.

The protein belongs to the TRAFAC class translation factor GTPase superfamily. Classic translation factor GTPase family. EF-G/EF-2 subfamily.

The protein localises to the cytoplasm. Catalyzes the GTP-dependent ribosomal translocation step during translation elongation. During this step, the ribosome changes from the pre-translocational (PRE) to the post-translocational (POST) state as the newly formed A-site-bound peptidyl-tRNA and P-site-bound deacylated tRNA move to the P and E sites, respectively. Catalyzes the coordinated movement of the two tRNA molecules, the mRNA and conformational changes in the ribosome. This is Elongation factor G from Rhodopseudomonas palustris (strain HaA2).